The sequence spans 1374 residues: Y' element ATP-dependent helicase YLL067C (1374 aa).

The disordered stretch occupies residues 321–345 (AGEAASSDHDQKISRVTRKRPREPK). One can recognise a Helicase ATP-binding domain in the interval 375 to 552 (EIYMADTPSV…LQRIGLTGLA (178 aa)). An ATP-binding site is contributed by 388–395 (APPGYGKT). Positions 498–501 (DEFH) match the DEAH box motif. The Helicase C-terminal domain maps to 609–758 (KLLLALFEIE…EFYGLESKKG (150 aa)). Residues 832–1011 (ANASTNATTN…ATTTESTNAS (180 aa)) are compositionally biased toward low complexity. Positions 832–1035 (ANASTNATTN…RFHPVTDINK (204 aa)) are disordered. A compositionally biased stretch (basic and acidic residues) spans 1012 to 1035 (AKEDANKDGNAEDNRFHPVTDINK).

This sequence belongs to the helicase family. Yeast subtelomeric Y' repeat subfamily.

Catalyzes DNA unwinding and is involved in telomerase-independent telomere maintenance. The protein is Y' element ATP-dependent helicase YLL067C of Saccharomyces cerevisiae (strain ATCC 204508 / S288c) (Baker's yeast).